The sequence spans 130 residues: Small ribosomal subunit protein uS8 (130 aa).

This sequence belongs to the universal ribosomal protein uS8 family. Part of the 30S ribosomal subunit. Contacts proteins S5 and S12.

One of the primary rRNA binding proteins, it binds directly to 16S rRNA central domain where it helps coordinate assembly of the platform of the 30S subunit. This chain is Small ribosomal subunit protein uS8, found in Aliivibrio salmonicida (strain LFI1238) (Vibrio salmonicida (strain LFI1238)).